Reading from the N-terminus, the 781-residue chain is Translation initiation factor IF-2 (781 aa).

The disordered stretch occupies residues 44–195 (RQLDNAVDGT…TPPKPKELPE (152 aa)). The span at 53–65 (TNKKAEAPKKETT) shows a compositional bias: basic and acidic residues. Polar residues predominate over residues 66-81 (SNENGNSKGPNKPNMT). The segment covering 82 to 93 (NSNEKSNKPNKP) has biased composition (low complexity). Polar residues predominate over residues 115–126 (KPANTGNQTQAS). Over residues 127 to 169 (GNQQAGGQKRNNNNNSNRPGGGNPNRPGGNNRPNRGGNFNNKG) the composition is skewed to low complexity. A tr-type G domain is found at 282 to 451 (ERPPVVTIMG…LLVSEVEELK (170 aa)). The tract at residues 291–298 (GHVDHGKT) is G1. Residue 291-298 (GHVDHGKT) participates in GTP binding. The interval 316-320 (GITQH) is G2. Residues 337–340 (DTPG) are G3. GTP is bound by residues 337 to 341 (DTPGH) and 391 to 394 (NKID). A G4 region spans residues 391–394 (NKID). Residues 427–429 (SAK) form a G5 region.

This sequence belongs to the TRAFAC class translation factor GTPase superfamily. Classic translation factor GTPase family. IF-2 subfamily.

It localises to the cytoplasm. One of the essential components for the initiation of protein synthesis. Protects formylmethionyl-tRNA from spontaneous hydrolysis and promotes its binding to the 30S ribosomal subunits. Also involved in the hydrolysis of GTP during the formation of the 70S ribosomal complex. The protein is Translation initiation factor IF-2 of Listeria monocytogenes serotype 4a (strain HCC23).